We begin with the raw amino-acid sequence, 364 residues long: Mannose-1-phosphate guanyltransferase (364 aa).

It belongs to the transferase hexapeptide repeat family.

It is found in the cytoplasm. It catalyses the reaction alpha-D-mannose 1-phosphate + GTP + H(+) = GDP-alpha-D-mannose + diphosphate. It functions in the pathway nucleotide-sugar biosynthesis; GDP-alpha-D-mannose biosynthesis; GDP-alpha-D-mannose from alpha-D-mannose 1-phosphate (GTP route): step 1/1. Involved in cell wall synthesis where it is required for glycosylation. Involved in cell cycle progression through cell-size checkpoint. This chain is Mannose-1-phosphate guanyltransferase (mpg-1), found in Neurospora crassa (strain ATCC 24698 / 74-OR23-1A / CBS 708.71 / DSM 1257 / FGSC 987).